A 146-amino-acid chain; its full sequence is 3-hydroxyacyl-[acyl-carrier-protein] dehydratase FabZ (146 aa).

His49 is a catalytic residue.

This sequence belongs to the thioester dehydratase family. FabZ subfamily.

It localises to the cytoplasm. It carries out the reaction a (3R)-hydroxyacyl-[ACP] = a (2E)-enoyl-[ACP] + H2O. Functionally, involved in unsaturated fatty acids biosynthesis. Catalyzes the dehydration of short chain beta-hydroxyacyl-ACPs and long chain saturated and unsaturated beta-hydroxyacyl-ACPs. This chain is 3-hydroxyacyl-[acyl-carrier-protein] dehydratase FabZ, found in Psychrobacter arcticus (strain DSM 17307 / VKM B-2377 / 273-4).